We begin with the raw amino-acid sequence, 100 residues long: MELTPREKDKLLIFTAALLAERRRARGLKLNYPETVALITAALMEGARDGKTVAELMSEGTRILGRDEVMEGVPEMISNIQVEVTFPDGTKLITVHNPVV.

The protein belongs to the urease gamma subunit family. As to quaternary structure, heterotrimer of UreA (gamma), UreB (beta) and UreC (alpha) subunits. Three heterotrimers associate to form the active enzyme.

The protein resides in the cytoplasm. It catalyses the reaction urea + 2 H2O + H(+) = hydrogencarbonate + 2 NH4(+). It participates in nitrogen metabolism; urea degradation; CO(2) and NH(3) from urea (urease route): step 1/1. In Bordetella bronchiseptica (strain ATCC BAA-588 / NCTC 13252 / RB50) (Alcaligenes bronchisepticus), this protein is Urease subunit gamma.